Reading from the N-terminus, the 299-residue chain is MKKLGTDLLKRGFAKMVKHGVVMDVTNVEQAQIAEDAGAAAVMALERVPADIRVQGGVARMSDPEMILEIKDAVSIPVMAKARIGHFVEAQLLESIGVDMVDESEVLTPADEVNHIDKRAFTAPFVCGARNLGEALRRIDEGAAMIRTKGEAGTGNVVEAVKHMRAVNEGIARVVGYKEMGLEAELIQMARNELKVPMELISEVAELKRLPVVNFAAGGIATPADAALMMQMGCDGVFVGSGIFKSGNPATRAKAIVEATYNFDKPAVIGEVSKNLGEAMVGINIDEIPEEKLLAKRGI.

Asp24 contacts D-ribose 5-phosphate. Lys81 acts as the Schiff-base intermediate with D-ribose 5-phosphate in catalysis. D-ribose 5-phosphate is bound at residue Gly153. Arg165 provides a ligand contact to D-glyceraldehyde 3-phosphate. Residues Gly219 and 240 to 241 (GS) each bind D-ribose 5-phosphate.

Belongs to the PdxS/SNZ family. In terms of assembly, in the presence of PdxT, forms a dodecamer of heterodimers.

It catalyses the reaction aldehydo-D-ribose 5-phosphate + D-glyceraldehyde 3-phosphate + L-glutamine = pyridoxal 5'-phosphate + L-glutamate + phosphate + 3 H2O + H(+). Its pathway is cofactor biosynthesis; pyridoxal 5'-phosphate biosynthesis. Catalyzes the formation of pyridoxal 5'-phosphate from ribose 5-phosphate (RBP), glyceraldehyde 3-phosphate (G3P) and ammonia. The ammonia is provided by the PdxT subunit. Can also use ribulose 5-phosphate and dihydroxyacetone phosphate as substrates, resulting from enzyme-catalyzed isomerization of RBP and G3P, respectively. The chain is Pyridoxal 5'-phosphate synthase subunit PdxS from Methanococcus maripaludis (strain C6 / ATCC BAA-1332).